The sequence spans 798 residues: Probable serine/threonine-protein kinase DDB_G0276461 (798 aa).

In terms of domain architecture, Protein kinase spans 54 to 324; that stretch reads VTEVKLVAEG…DLLNYLNEIR (271 aa). ATP is bound by residues 60–68 and Lys82; that span reads VAEGGFGFV. Asp185 serves as the catalytic Proton acceptor. Disordered stretches follow at residues 330–538, 553–645, and 659–798; these read GLQT…NGNF, TNGS…SYNN, and SSAS…FGIL. 6 stretches are compositionally biased toward low complexity: residues 335-406, 429-490, 506-538, 557-603, 611-642, and 659-678; these read SSNN…NTPN, SNSN…NNNN, PSPS…NGNF, TNFE…INNS, SSGS…NSGS, and SSAS…NSWN. Over residues 679–697 the composition is skewed to polar residues; it reads VTLTPSQSNKNSTGNLKPL. Low complexity predominate over residues 698 to 716; it reads NNNNNNNNNNNNRFANNTN. Residues 717–769 show a composition bias toward polar residues; the sequence is SSRDYSFDFSSPNTSNNNDFGSFVQPSSSSSLNTTHFSKPNYNVNLNQTTSMT. Over residues 770–790 the composition is skewed to low complexity; sequence NNYNNNNYNNNNNSNNNNNNS.

It belongs to the protein kinase superfamily. Ser/Thr protein kinase family.

The enzyme catalyses L-seryl-[protein] + ATP = O-phospho-L-seryl-[protein] + ADP + H(+). It carries out the reaction L-threonyl-[protein] + ATP = O-phospho-L-threonyl-[protein] + ADP + H(+). In Dictyostelium discoideum (Social amoeba), this protein is Probable serine/threonine-protein kinase DDB_G0276461.